Here is a 76-residue protein sequence, read N- to C-terminus: Gallerimycin (76 aa).

An N-terminal signal peptide occupies residues 1–19 (MKIAFIVAISLAFLAVTSC).

This sequence belongs to the invertebrate defensin family.

Has antifungal activity against the entomopathogenic fungus M.nisopliae, but does not display any antifungal activity against S.cerevisiae nor any antimicrobial activity against M.luteus, B.subtilis, and E.coli. The sequence is that of Gallerimycin (LOC113523440) from Galleria mellonella (Greater wax moth).